Consider the following 144-residue polypeptide: Conopressin-conophysin (144 aa).

Residues 1–27 form the signal peptide; that stretch reads MTRSALQMGRLTLVLCLLLQLVLVTQA. Cysteine 28 and cysteine 33 are joined by a disulfide. Aspartate 36 is subject to Aspartic acid 1-amide. Positions 37–44 are excised as a propeptide; that stretch reads GERDVDGR. 7 disulfides stabilise this stretch: cysteine 50–cysteine 90, cysteine 53–cysteine 64, cysteine 58–cysteine 80, cysteine 65–cysteine 70, cysteine 97–cysteine 117, cysteine 109–cysteine 129, and cysteine 118–cysteine 123. Positions 131-144 are excised as a propeptide; the sequence is KESKSGIRVGCQRS.

The protein belongs to the vasopressin/oxytocin family. In terms of tissue distribution, expressed by the venom duct.

It localises to the secreted. The chain is Conopressin-conophysin from Conus bayani (Bayan's cone).